Here is a 151-residue protein sequence, read N- to C-terminus: Caveolin-3 (151 aa).

The Cytoplasmic portion of the chain corresponds to 1–83 (MMAEEHTDLE…RLLSTLLGVP (83 aa)). A Glycyl lysine isopeptide (Lys-Gly) (interchain with G-Cter in SUMO3) cross-link involves residue Lys-38. Residues 64–114 (TFTVSKYWCYRLLSTLLGVPLALLWGFLFACISFCHIWAVVPCIKSYLIEI) are required for interaction with DAG1. The segment at residues 84 to 104 (LALLWGFLFACISFCHIWAVV) is an intramembrane region (helical). Residues 105–151 (PCIKSYLIEIQCISHIYSLCIRTFCNPLFAALGQVCSNIKVMLRKEV) lie on the Cytoplasmic side of the membrane.

This sequence belongs to the caveolin family. As to quaternary structure, homooligomer. Interacts with DYSF. Interacts with DLG1 and KCNA5; forms a ternary complex. Interacts with DAG1 (via its C-terminal); the interaction prevents binding of DAG1 with DMD. Interacts with TRIM72. Interacts with MUSK; may regulate MUSK signaling. Interacts with POPDC1. Interacts with CAVIN1, CAVIN2 and CAVIN4. Sumoylation with SUMO3 by PIAS4 may reduce agonist-induced internalization and desensitization of adrenergic receptor ABRD2.

The protein resides in the golgi apparatus membrane. Its subcellular location is the cell membrane. It is found in the membrane. The protein localises to the caveola. It localises to the sarcolemma. Its function is as follows. May act as a scaffolding protein within caveolar membranes. Interacts directly with G-protein alpha subunits and can functionally regulate their activity. May also regulate voltage-gated potassium channels. Plays a role in the sarcolemma repair mechanism of both skeletal muscle and cardiomyocytes that permits rapid resealing of membranes disrupted by mechanical stress. Mediates the recruitment of CAVIN2 and CAVIN3 proteins to the caveolae. The sequence is that of Caveolin-3 (CAV3) from Bos taurus (Bovine).